The primary structure comprises 350 residues: Renin receptor (350 aa).

The first 17 residues, 1 to 17, serve as a signal peptide directing secretion; sequence MAVLVVLLSSLVSSALA. The Extracellular segment spans residues 18–302; sequence NEFSILRSPG…YNLAYKYNLE (285 aa). Residues 303-323 form a helical membrane-spanning segment; that stretch reads YSVVFNLVLWIMTGLALAVII. The Cytoplasmic segment spans residues 324 to 350; it reads TSYNIWNMDPGYDSIIYRMTNQKIRMD. Residues 346-350 carry the Mediates retrograde transport to the ER motif; that stretch reads KIRMD.

As to quaternary structure, interacts with renin. Accessory component of the multisubunit proton-transporting vacuolar (V)-ATPase protein pump. Interacts (via N-terminus) with ATP6AP1 (via N-terminus). Interacts with ATP6V0D1; ATP6V0D1 is a V-ATPase complex subunit and the interaction promotes V-ATPase complex assembly. Interacts with TMEM9; TMEM9 is a V-ATPase assembly regulator and the interaction induces the interaction with ATP6V0D1. Interacts with VMA21 (via N-terminus); VMA21 is a V-ATPase accessory component. In terms of processing, phosphorylated. Post-translationally, proteolytically cleaved by a furin-like convertase in the trans-Golgi network to generate N- and C-terminal fragments. As to expression, expressed in the brain.

Its subcellular location is the endoplasmic reticulum membrane. It localises to the lysosome membrane. The protein resides in the cytoplasmic vesicle. The protein localises to the autophagosome membrane. It is found in the cell projection. Its subcellular location is the dendritic spine membrane. It localises to the axon. The protein resides in the endosome membrane. The protein localises to the clathrin-coated vesicle membrane. It is found in the secretory vesicle. Its subcellular location is the synaptic vesicle membrane. In terms of biological role, multifunctional protein which functions as a renin, prorenin cellular receptor and is involved in the assembly of the lysosomal proton-transporting V-type ATPase (V-ATPase) and the acidification of the endo-lysosomal system. May mediate renin-dependent cellular responses by activating ERK1 and ERK2. By increasing the catalytic efficiency of renin in AGT/angiotensinogen conversion to angiotensin I, may also play a role in the renin-angiotensin system (RAS). Through its function in V-type ATPase (v-ATPase) assembly and acidification of the lysosome it regulates protein degradation and may control different signaling pathways important for proper brain development, synapse morphology and synaptic transmission. In Rattus norvegicus (Rat), this protein is Renin receptor (Atp6ap2).